The chain runs to 262 residues: tRNA pseudouridine synthase A (262 aa).

Asp51 (nucleophile) is an active-site residue. Tyr109 serves as a coordination point for substrate.

The protein belongs to the tRNA pseudouridine synthase TruA family. Homodimer.

The catalysed reaction is uridine(38/39/40) in tRNA = pseudouridine(38/39/40) in tRNA. Its function is as follows. Formation of pseudouridine at positions 38, 39 and 40 in the anticodon stem and loop of transfer RNAs. The sequence is that of tRNA pseudouridine synthase A from Actinobacillus pleuropneumoniae serotype 5b (strain L20).